The primary structure comprises 124 residues: Large ribosomal subunit protein uL22c (124 aa).

Belongs to the universal ribosomal protein uL22 family. As to quaternary structure, part of the 50S ribosomal subunit.

It localises to the plastid. It is found in the chloroplast. This protein binds specifically to 23S rRNA. Functionally, the globular domain of the protein is located near the polypeptide exit tunnel on the outside of the subunit, while an extended beta-hairpin is found that lines the wall of the exit tunnel in the center of the 70S ribosome. This is Large ribosomal subunit protein uL22c (rpl22) from Amborella trichopoda.